The chain runs to 387 residues: Phosphoglycerate kinase (387 aa).

Residues 21–23 (DLN), Arg-36, 59–62 (HLGR), Arg-113, and Arg-146 each bind substrate. Residues Lys-197, Glu-314, and 340–343 (GGDT) each bind ATP.

This sequence belongs to the phosphoglycerate kinase family. Monomer.

The protein resides in the cytoplasm. It carries out the reaction (2R)-3-phosphoglycerate + ATP = (2R)-3-phospho-glyceroyl phosphate + ADP. Its pathway is carbohydrate degradation; glycolysis; pyruvate from D-glyceraldehyde 3-phosphate: step 2/5. This Salmonella schwarzengrund (strain CVM19633) protein is Phosphoglycerate kinase.